We begin with the raw amino-acid sequence, 103 residues long: Histone H4.1 (103 aa).

The segment covering 1 to 14 (MSGRGKGGKGLGKG) has biased composition (gly residues). Positions 1–20 (MSGRGKGGKGLGKGGAKRHR) are disordered. Residue Lys-6 is modified to N6-acetyl-N6-methyllysine; alternate. N6-methyllysine; alternate is present on residues Lys-6, Lys-9, and Lys-13. Lys-13 carries the N6-acetyl-N6-methyllysine; alternate modification. A DNA-binding region spans residues 17 to 21 (KRHRK). An N6-glutaryllysine modification is found at Lys-92.

This sequence belongs to the histone H4 family. The nucleosome is a histone octamer containing two molecules each of H2A, H2B, H3 and H4 assembled in one H3-H4 heterotetramer and two H2A-H2B heterodimers. The octamer wraps approximately 147 bp of DNA. Post-translationally, glutarylation at Lys-92 (H4K91glu) destabilizes nucleosomes by promoting dissociation of the H2A-H2B dimers from nucleosomes.

It is found in the nucleus. The protein resides in the chromosome. Its function is as follows. Core component of nucleosome. Nucleosomes wrap and compact DNA into chromatin, limiting DNA accessibility to the cellular machineries which require DNA as a template. Histones thereby play a central role in transcription regulation, DNA repair, DNA replication and chromosomal stability. DNA accessibility is regulated via a complex set of post-translational modifications of histones, also called histone code, and nucleosome remodeling. This is Histone H4.1 (HHF1) from Eremothecium gossypii (strain ATCC 10895 / CBS 109.51 / FGSC 9923 / NRRL Y-1056) (Yeast).